The chain runs to 376 residues: Fibromodulin (376 aa).

A signal peptide spans 1–18; the sequence is MQWASILLLAGLCSLSWA. Q19 bears the Pyrrolidone carboxylic acid mark. Y20, Y38, Y45, Y47, Y50, Y53, Y55, Y63, and Y65 each carry sulfotyrosine. Residues 67-105 form the LRRNT domain; that stretch reads SPPQPEPRDCPQECDCPPNFPTAMYCDNRNLKYLPFVPS. 8 LRR repeats span residues 106–127, 130–151, 156–176, 177–198, 201–222, 224–245, 246–266, and 269–289; these read RMKY…VFDN, GLLW…KKVF, HLER…PLPR, SLRE…ALEG, NLTA…MKGL, SLIL…LPSA, LEQL…YFRG, and KLLY…ASNT. A glycan (N-linked (GlcNAc...) (keratan sulfate) asparagine) is linked at N127. N166 carries an N-linked (GlcNAc...) (keratan sulfate) asparagine glycan. Residue N201 is glycosylated (N-linked (GlcNAc...) (keratan sulfate) asparagine). A glycan (N-linked (GlcNAc...) (keratan sulfate) asparagine) is linked at N291. LRR repeat units follow at residues 294–315 and 316–335; these read SLLE…STNL and ENLY…SFCT. An intrachain disulfide couples C334 to C367. A glycan (N-linked (GlcNAc...) asparagine) is linked at N341. An LRR 11 repeat occupies 344–365; sequence KLQVLRLDGNEIKRSAMPADAP.

Belongs to the small leucine-rich proteoglycan (SLRP) family. SLRP class II subfamily. As to quaternary structure, binds to type I and type II collagen. Binds keratan sulfate chains.

Its subcellular location is the secreted. The protein localises to the extracellular space. The protein resides in the extracellular matrix. Functionally, affects the rate of fibrils formation. May have a primary role in collagen fibrillogenesis. This chain is Fibromodulin (FMOD), found in Bos taurus (Bovine).